We begin with the raw amino-acid sequence, 467 residues long: Fumarate hydratase class II (467 aa).

Residues 98 to 100, Arg-126, 129 to 132, 139 to 141, and Thr-187 contribute to the substrate site; these read SGT, HPND, and SSN. The Proton donor/acceptor role is filled by His-188. Residue Ser-318 is part of the active site. Substrate is bound by residues Ser-319 and 324 to 326; that span reads KVN.

Belongs to the class-II fumarase/aspartase family. Fumarase subfamily. As to quaternary structure, homotetramer.

Its subcellular location is the cytoplasm. It catalyses the reaction (S)-malate = fumarate + H2O. Its pathway is carbohydrate metabolism; tricarboxylic acid cycle; (S)-malate from fumarate: step 1/1. In terms of biological role, involved in the TCA cycle. Catalyzes the stereospecific interconversion of fumarate to L-malate. This Escherichia coli O157:H7 protein is Fumarate hydratase class II.